The primary structure comprises 512 residues: Cytochrome P450 monooxygenase astD (512 aa).

A helical transmembrane segment spans residues 19-39 (MGISILVMLSTFLALGTIFVY). Residues N191 and N413 are each glycosylated (N-linked (GlcNAc...) asparagine). Position 449 (C449) interacts with heme.

This sequence belongs to the cytochrome P450 family. Requires heme as cofactor.

It is found in the membrane. Its pathway is secondary metabolite biosynthesis; terpenoid biosynthesis. Cytochrome P450 monooxygenase; part of the gene cluster that mediates the biosynthesis of astellolides, drimane-type sesquiterpene esters that show antimicrobial, anti-inflammatory, and anti-tumor activities. The first step in astellolide biosynthesis is performed by the sesquiterpene cyclase astC that catalyzes the formation of drimanyl pyrophosphate from farnesyl pyrophosphate. Drimanyl pyrophosphate is then dephosphorylated by the sesquiterpene phosphatase astI to produce drimanyl monophosphate which is further dephosphorylated to drim-8-ene-11-ol by atsK. Drim-8-ene-11-ol is converted to confertifolin, probably by the cytochrome P450 monooxygenase astD and/or the dehydrogenase astE. The cytochrome P450 monooxygenases astB, astF and astJ then hydroxylate confertifolin at C6, C14, or C15 to form trihydroxy confertifolin. The nonribosomal peptide synthetase astA catalyzes ester bond formation between trihydroxy contifolin and benzoic acid (BA) or 4-hydroxy benzoic acid (4HBA), leading to the formation of dideacetyl astellolides A and B, respectively. Finally, the O-acetyltransferase astG converts dideacetyl astellolides A and B into deacetyl astellolides A and B. This is Cytochrome P450 monooxygenase astD from Aspergillus oryzae (strain ATCC 42149 / RIB 40) (Yellow koji mold).